A 154-amino-acid polypeptide reads, in one-letter code: SsrA-binding protein (154 aa).

It belongs to the SmpB family.

The protein resides in the cytoplasm. Functionally, required for rescue of stalled ribosomes mediated by trans-translation. Binds to transfer-messenger RNA (tmRNA), required for stable association of tmRNA with ribosomes. tmRNA and SmpB together mimic tRNA shape, replacing the anticodon stem-loop with SmpB. tmRNA is encoded by the ssrA gene; the 2 termini fold to resemble tRNA(Ala) and it encodes a 'tag peptide', a short internal open reading frame. During trans-translation Ala-aminoacylated tmRNA acts like a tRNA, entering the A-site of stalled ribosomes, displacing the stalled mRNA. The ribosome then switches to translate the ORF on the tmRNA; the nascent peptide is terminated with the 'tag peptide' encoded by the tmRNA and targeted for degradation. The ribosome is freed to recommence translation, which seems to be the essential function of trans-translation. This Lachnoclostridium phytofermentans (strain ATCC 700394 / DSM 18823 / ISDg) (Clostridium phytofermentans) protein is SsrA-binding protein.